The primary structure comprises 126 residues: Small ribosomal subunit protein uS13 (126 aa).

The tract at residues 95–126 (NLPVHGQRTHTNARTRKGPRRAIAGKKKAGKK) is disordered.

It belongs to the universal ribosomal protein uS13 family. Part of the 30S ribosomal subunit. Forms a loose heterodimer with protein S19. Forms two bridges to the 50S subunit in the 70S ribosome.

Functionally, located at the top of the head of the 30S subunit, it contacts several helices of the 16S rRNA. In the 70S ribosome it contacts the 23S rRNA (bridge B1a) and protein L5 of the 50S subunit (bridge B1b), connecting the 2 subunits; these bridges are implicated in subunit movement. Contacts the tRNAs in the A and P-sites. This is Small ribosomal subunit protein uS13 from Frankia casuarinae (strain DSM 45818 / CECT 9043 / HFP020203 / CcI3).